The chain runs to 204 residues: Somatotropin (204 aa).

A signal peptide spans 1–17 (MDRVVLLLSVLSLGVSS). A Pyrrolidone carboxylic acid modification is found at glutamine 18. Histidine 36 provides a ligand contact to Zn(2+). Residues cysteine 69 and cysteine 177 are joined by a disulfide bond. Glutamate 186 contributes to the Zn(2+) binding site. A disulfide bridge connects residues cysteine 194 and cysteine 202.

The protein belongs to the somatotropin/prolactin family.

Its subcellular location is the secreted. In terms of biological role, growth hormone plays an important role in growth control and is involved in the regulation of several anabolic processes. Implicated as an osmoregulatory substance important for seawater adaptation. The chain is Somatotropin (gh) from Lates calcarifer (Barramundi).